A 301-amino-acid polypeptide reads, in one-letter code: Large ribosomal subunit protein uL18y (301 aa).

The segment at 247-267 (RAEPNHKKTEKSAPKEHKRYN) is disordered. The segment covering 249–261 (EPNHKKTEKSAPK) has biased composition (basic and acidic residues).

The protein belongs to the universal ribosomal protein uL18 family. Component of the large ribosomal subunit (LSU).

The protein localises to the cytoplasm. Its subcellular location is the nucleus. The protein resides in the nucleolus. It localises to the nucleoplasm. Functionally, component of the ribosome, a large ribonucleoprotein complex responsible for the synthesis of proteins in the cell. The small ribosomal subunit (SSU) binds messenger RNAs (mRNAs) and translates the encoded message by selecting cognate aminoacyl-transfer RNA (tRNA) molecules. The large subunit (LSU) contains the ribosomal catalytic site termed the peptidyl transferase center (PTC), which catalyzes the formation of peptide bonds, thereby polymerizing the amino acids delivered by tRNAs into a polypeptide chain. The nascent polypeptides leave the ribosome through a tunnel in the LSU and interact with protein factors that function in enzymatic processing, targeting, and the membrane insertion of nascent chains at the exit of the ribosomal tunnel. Seems involved in the regulation of cell proliferation. Essential in leaf polarity establishment, probably having a role for translation in leaf dorsoventral patterning to specify leaf adaxial identity. The protein is Large ribosomal subunit protein uL18y of Arabidopsis thaliana (Mouse-ear cress).